A 398-amino-acid polypeptide reads, in one-letter code: UDP-D-apiose/UDP-D-xylose synthase (398 aa).

57-88 is a binding site for NAD(+); that stretch reads DVYCDKIRHLVDPAPPHLHGRISFHRLNIKND. Arg190 contributes to the substrate binding site. Tyr193 functions as the Proton acceptor in the catalytic mechanism. Position 193–197 (193–197) interacts with NAD(+); sequence YACAK. Asn222 serves as a coordination point for substrate. Position 243 (Arg243) interacts with NAD(+). Substrate contacts are provided by residues 244-248, 261-268, and 345-349; these read VLACF, VDGGQSQR, and DSDKR.

This sequence belongs to the NAD(P)-dependent epimerase/dehydratase family. Homodimer. It depends on NAD(+) as a cofactor.

It localises to the cytoplasm. In terms of biological role, catalyzes the conversion of UDP-D-glucuronate to a mixture of UDP-D-apiose and UDP-D-xylose. D-Apiose (3-C-hydroxymethyl-d-erythrose) is the only plant cell wall monosaccharide with a branched carbon skeleton and found in rhamnogalacturonan II (RG-II), apiogalacturonan, and several apioglycosides. The protein is UDP-D-apiose/UDP-D-xylose synthase of Oryza sativa subsp. japonica (Rice).